A 104-amino-acid polypeptide reads, in one-letter code: Phosphoribosyl-ATP pyrophosphatase (104 aa).

This sequence belongs to the PRA-PH family.

It localises to the cytoplasm. The catalysed reaction is 1-(5-phospho-beta-D-ribosyl)-ATP + H2O = 1-(5-phospho-beta-D-ribosyl)-5'-AMP + diphosphate + H(+). Its pathway is amino-acid biosynthesis; L-histidine biosynthesis; L-histidine from 5-phospho-alpha-D-ribose 1-diphosphate: step 2/9. The sequence is that of Phosphoribosyl-ATP pyrophosphatase from Methanoregula boonei (strain DSM 21154 / JCM 14090 / 6A8).